Consider the following 447-residue polypeptide: Hydroxymethylglutaryl-CoA synthase (447 aa).

Glu-86 serves as the catalytic Proton donor/acceptor. Catalysis depends on Cys-118, which acts as the Acyl-thioester intermediate. (3S)-3-hydroxy-3-methylglutaryl-CoA-binding residues include Cys-118, Asn-156, Thr-160, Ser-210, His-250, Lys-259, Asn-327, and Ser-361. His-250 acts as the Proton donor/acceptor in catalysis. At Thr-398 the chain carries Phosphothreonine.

The protein belongs to the thiolase-like superfamily. HMG-CoA synthase family.

The catalysed reaction is acetoacetyl-CoA + acetyl-CoA + H2O = (3S)-3-hydroxy-3-methylglutaryl-CoA + CoA + H(+). It functions in the pathway metabolic intermediate biosynthesis; (R)-mevalonate biosynthesis; (R)-mevalonate from acetyl-CoA: step 2/3. Functionally, hydroxymethylglutaryl-CoA synthase; part of the first module of ergosterol biosynthesis pathway that includes the early steps of the pathway, conserved across all eukaryotes, and which results in the formation of mevalonate from acetyl-coenzyme A (acetyl-CoA). Hcs1 condenses acetyl-CoA with acetoacetyl-CoA to form hydroxymethylglutaryl-CoA (HMG-CoA). The first module starts with the action of the cytosolic acetyl-CoA acetyltransferase eg10 that catalyzes the formation of acetoacetyl-CoA. The hydroxymethylglutaryl-CoA synthases erg13 then condenses acetyl-CoA with acetoacetyl-CoA to form HMG-CoA. The rate-limiting step of the early module is the reduction to mevalonate by the 3-hydroxy-3-methylglutaryl-coenzyme A (HMG-CoA) reductases hcs1. This Schizosaccharomyces pombe (strain 972 / ATCC 24843) (Fission yeast) protein is Hydroxymethylglutaryl-CoA synthase.